A 494-amino-acid polypeptide reads, in one-letter code: UDP-glucose 6-dehydrogenase (494 aa).

Residues 11–16 (GAGYVG), Asp36, Arg41, and 89–93 (VNTPT) each bind NAD(+). Positions 88–110 (SVNTPTKTYGMGKGRAADLKYIE) are disordered. Residue Lys107 is modified to N6-acetyllysine. The tract at residues 129–135 (KSTVPVR) is allosteric switch region. An NAD(+)-binding site is contributed by 130–132 (STV). Glu161 acts as the Proton donor/acceptor in catalysis. Substrate is bound by residues 161–165 (EFLAE), 220–224 (KLAAN), Arg260, and 267–273 (KASVGFG). Residue Glu165 coordinates NAD(+). Residue Lys220 is the Proton donor/acceptor of the active site. Cys276 serves as the catalytic Nucleophile. 276 to 279 (CFQK) is an NAD(+) binding site. Residues 321–325 (SLFNT) are important for formation of active hexamer structure. Position 338 to 339 (338 to 339 (FK)) interacts with substrate. Residue Arg346 coordinates NAD(+). Residue Arg442 coordinates substrate. Residues 466–494 (VSSKRIPYAPSGEIPKFSLQDPPNKKPKV) are disordered. Ser476 is subject to Phosphoserine.

This sequence belongs to the UDP-glucose/GDP-mannose dehydrogenase family. In terms of assembly, homohexamer.

The enzyme catalyses UDP-alpha-D-glucose + 2 NAD(+) + H2O = UDP-alpha-D-glucuronate + 2 NADH + 3 H(+). The protein operates within nucleotide-sugar biosynthesis; UDP-alpha-D-glucuronate biosynthesis; UDP-alpha-D-glucuronate from UDP-alpha-D-glucose: step 1/1. Its activity is regulated as follows. UDP-alpha-D-xylose (UDX) acts as a feedback inhibitor. It binds at the same site as the substrate, but functions as allosteric inhibitor by triggering a conformation change that disrupts the active hexameric ring structure and gives rise to an inactive, horseshoe-shaped hexamer. Its function is as follows. Catalyzes the formation of UDP-alpha-D-glucuronate, a constituent of complex glycosaminoglycans. Required for the biosynthesis of chondroitin sulfate and heparan sulfate. Required for embryonic development via its role in the biosynthesis of glycosaminoglycans. Required for proper brain and neuronal development. This is UDP-glucose 6-dehydrogenase (UGDH) from Pongo abelii (Sumatran orangutan).